The sequence spans 370 residues: DNA replication and repair protein RecF (370 aa).

30–37 (GENAQGKT) is a binding site for ATP.

The protein belongs to the RecF family.

Its subcellular location is the cytoplasm. The RecF protein is involved in DNA metabolism; it is required for DNA replication and normal SOS inducibility. RecF binds preferentially to single-stranded, linear DNA. It also seems to bind ATP. The chain is DNA replication and repair protein RecF from Staphylococcus carnosus (strain TM300).